A 433-amino-acid polypeptide reads, in one-letter code: MESLNALLQGMGLMHLGAGQAIMLLVSLLLLWLAIAKKFEPLLLLPIGFGGLLSNIPEAGLALTALESLLAHHDAGQLAVIAAKLHCAPDVHAIKEALALALPSVQNQMENLAVDMGYTPGVLALFYKVAIGSGVAPLVIFMGVGAMTDFGPLLANPRTLLLGAAAQFGIFATVLGALTLNYFGLISFTLPQAAAIGIIGGADGPTAIYLSGKLAPELLGAIAVAAYSYMALVPLIQPPIMKALTSETERKIRMVQLRTVSKREKILFPVVLLMLVALLLPDAAPLLGMFCFGNLMRESGVVERLSDTVQNGLINIVTIFLGLSVGAKLVADKFLQPQTLGILLLGVIAFGIGTAAGVLMAKLLNLCSKNKINPLIGSAGVSAVPMAARVSNKVGLESDAQNFLLMHAMGPNVAGVIGSAIAAGVMLKYVLAM.

9 helical membrane passes run 13–35 (LMHLGAGQAIMLLVSLLLLWLAI), 42–64 (LLLLPIGFGGLLSNIPEAGLALT), 125–147 (LFYKVAIGSGVAPLVIFMGVGAM), 160–182 (LLLGAAAQFGIFATVLGALTLNY), 214–236 (LAPELLGAIAVAAYSYMALVPLI), 266–288 (ILFPVVLLMLVALLLPDAAPLLG), 308–327 (TVQNGLINIVTIFLGLSVGA), 339–361 (TLGILLLGVIAFGIGTAAGVLMA), and 413–432 (VAGVIGSAIAAGVMLKYVLA).

It belongs to the GcdB/MmdB/OadB family. In terms of assembly, heterotrimer of an alpha, a beta and a gamma subunit. Requires Na(+) as cofactor.

The protein localises to the cell membrane. It carries out the reaction oxaloacetate + 2 Na(+)(in) + H(+) = pyruvate + 2 Na(+)(out) + CO2. Catalyzes the decarboxylation of oxaloacetate coupled to Na(+) translocation. The protein is Oxaloacetate decarboxylase beta chain 2 (oadB2) of Salmonella typhimurium (strain LT2 / SGSC1412 / ATCC 700720).